The sequence spans 77 residues: Acyl carrier protein (77 aa).

One can recognise a Carrier domain in the interval Met-1–Gln-76. Ser-36 bears the O-(pantetheine 4'-phosphoryl)serine mark.

Belongs to the acyl carrier protein (ACP) family. 4'-phosphopantetheine is transferred from CoA to a specific serine of apo-ACP by AcpS. This modification is essential for activity because fatty acids are bound in thioester linkage to the sulfhydryl of the prosthetic group.

It localises to the cytoplasm. It participates in lipid metabolism; fatty acid biosynthesis. Its function is as follows. Carrier of the growing fatty acid chain in fatty acid biosynthesis. This Chlamydia trachomatis serovar L2 (strain ATCC VR-902B / DSM 19102 / 434/Bu) protein is Acyl carrier protein.